A 95-amino-acid polypeptide reads, in one-letter code: Secretoglobin family 1C member 1 (95 aa).

The first 23 residues, 1-23 (MKGSSALLLVALSLLCVCGLTRA), serve as a signal peptide directing secretion.

It belongs to the secretoglobin family.

It localises to the secreted. The polypeptide is Secretoglobin family 1C member 1 (Scgb1c1) (Mus musculus (Mouse)).